Consider the following 1827-residue polypeptide: Phenolphthiocerol/phthiocerol polyketide synthase subunit C (1827 aa).

The Ketosynthase family 3 (KS3) domain maps to 35–461; sequence CEPVAVVGIG…GTNAHVVVEQ (427 aa). Residues Cys-207, His-342, and His-383 each act as for beta-ketoacyl synthase activity in the active site. The segment at 566–876 is acyltransferase; the sequence is VFVYSGQGSQ…LAAVGVAASE (311 aa). Ser-654 functions as the For malonyltransferase activity in the catalytic mechanism. The N-terminal hotdog fold stretch occupies residues 910–1037; it reads HPLLGAHIEM…AKVEQSPREC (128 aa). The dehydratase stretch occupies residues 910 to 1076; it reads HPLLGAHIEM…QHHGPAFAAL (167 aa). The region spanning 910-1198 is the PKS/mFAS DH domain; it reads HPLLGAHIEM…LRRVERRAVP (289 aa). His-942 acts as the Proton acceptor; for dehydratase activity in catalysis. The interval 1050–1198 is C-terminal hotdog fold; it reads GTTVSPADFY…LRRVERRAVP (149 aa). The active-site Proton donor; for dehydratase activity is the Asp-1111. A beta-ketoacyl reductase region spans residues 1439–1617; the sequence is ASYVVTGGLG…VINWGPWSEV (179 aa). An NADP(+)-binding site is contributed by 1440–1485; sequence SYVVTGGLGGLGLVVARWLVDRGAGRVVLGGRSDPTDEQCNVLAEL. Positions 1706-1785 constitute a Carrier domain; it reads RAVTERMCAR…DLTADLMRQL (80 aa). Ser-1745 carries the post-translational modification O-(pantetheine 4'-phosphoryl)serine.

NADP(+) is required as a cofactor. The cofactor is pantetheine 4'-phosphate.

It carries out the reaction icosanoyl-[(phenol)carboxyphthiodiolenone synthase] + 2 (S)-methylmalonyl-CoA + 3 malonyl-CoA + 5 NADPH + 10 H(+) = C32-carboxyphthiodiolenone-[(phenol)carboxyphthiodiolenone synthase] + 5 CO2 + 5 NADP(+) + 5 CoA + 2 H2O. It catalyses the reaction docosanoyl-[(phenol)carboxyphthiodiolenone synthase] + 2 (S)-methylmalonyl-CoA + 3 malonyl-CoA + 5 NADPH + 10 H(+) = C34-carboxyphthiodiolenone-[(phenol)carboxyphthiodiolenone synthase] + 5 CO2 + 5 NADP(+) + 5 CoA + 2 H2O. The catalysed reaction is 17-(4-hydroxyphenyl)heptadecanoyl-[(phenol)carboxyphthiodiolenone synthase] + 2 (S)-methylmalonyl-CoA + 3 malonyl-CoA + 5 NADPH + 10 H(+) = C35-(phenol)carboxyphthiodiolenone-[(phenol)carboxyphthiodiolenone synthase] + 5 CO2 + 5 NADP(+) + 5 CoA + 2 H2O. The enzyme catalyses 19-(4-hydroxyphenyl)nonadecanoyl-[(phenol)carboxyphthiodiolenone synthase] + 2 (S)-methylmalonyl-CoA + 3 malonyl-CoA + 5 NADPH + 10 H(+) = C37-(phenol)carboxyphthiodiolenone-[(phenol)carboxyphthiodiolenone synthase] + 5 CO2 + 5 NADP(+) + 5 CoA + 2 H2O. Its pathway is lipid metabolism; fatty acid biosynthesis. Its function is as follows. Part of the PpsABCDE complex involved in the biosynthesis of the lipid core common to phthiocerols and phenolphthiocerols by successive additions of malonyl-CoA or methylmalonyl-CoA extender units. PpsA can accept as substrate the activated forms of either icosanoyl (C20), docosanoyl (C22) or lignoceroyl (C24) groups from FadD26, or a (4-hydroxyphenyl)-C17 or (4-hydroxyphenyl)-C19 fatty acyl from FadD29. PpsA initiates the biosynthesis and extends its substrate using a malonyl-CoA extender unit. The PpsB and PpsC proteins add the second and third malonyl-CoA extender units. PpsD adds an (R)-methylmalonyl unit and PpsE adds a second (R)-methylmalonyl unit. The incorporation of the methylmalonyl units results in formation of two branched methyl groups in the elongated product. The chain is Phenolphthiocerol/phthiocerol polyketide synthase subunit C (ppsD) from Mycobacterium bovis (strain ATCC BAA-935 / AF2122/97).